Consider the following 161-residue polypeptide: uncharacterized protein (161 aa).

Residues 1-35 (MVMAMGFDTVVAAIMATAIIVAVAYTFLAGSTSIA) form the signal peptide.

This is an uncharacterized protein from Archaeoglobus fulgidus (strain ATCC 49558 / DSM 4304 / JCM 9628 / NBRC 100126 / VC-16).